The primary structure comprises 641 residues: Methionine--tRNA ligase (641 aa).

The 'HIGH' region motif lies at 13–23 (YYPSAKLHIGN). Residues cysteine 128, cysteine 131, cysteine 145, and cysteine 148 each coordinate Zn(2+). Residues 298 to 302 (KMSKS) carry the 'KMSKS' region motif. Lysine 301 serves as a coordination point for ATP. The region spanning 539-641 (DFDKIDLRVV…GELPTGSQVR (103 aa)) is the tRNA-binding domain.

It belongs to the class-I aminoacyl-tRNA synthetase family. MetG type 2A subfamily. Homodimer. It depends on Zn(2+) as a cofactor.

It is found in the cytoplasm. The enzyme catalyses tRNA(Met) + L-methionine + ATP = L-methionyl-tRNA(Met) + AMP + diphosphate. Functionally, is required not only for elongation of protein synthesis but also for the initiation of all mRNA translation through initiator tRNA(fMet) aminoacylation. The sequence is that of Methionine--tRNA ligase from Clostridium tetani (strain Massachusetts / E88).